The primary structure comprises 66 residues: Beta-toxin Cb1 (66 aa).

The 66-residue stretch at 1-66 folds into the LCN-type CS-alpha/beta domain; the sequence is KEGYIVNHST…VWPLPKKTCN (66 aa). Intrachain disulfides connect Cys-12/Cys-65, Cys-16/Cys-41, Cys-25/Cys-46, and Cys-29/Cys-48.

This sequence belongs to the long (4 C-C) scorpion toxin superfamily. Sodium channel inhibitor family. Beta subfamily. Expressed by the venom gland.

It localises to the secreted. Inhibited by human antibodies scFvs 10FG2 and LR. Its function is as follows. Beta toxins bind voltage-independently at site-4 of sodium channels (Nav) and reduces peak current and shifts the voltage of activation toward more negative potentials thereby affecting sodium channel activation and promoting spontaneous and repetitive firing. Has an inhibitory effect on voltage-gated sodium channel hNav1.6/SCN8A, affecting both the activation and inactivation processes. This toxin is active against mammals and lethal to mice. The chain is Beta-toxin Cb1 from Centruroides baergi (Scorpion).